Consider the following 117-residue polypeptide: uncharacterized protein (117 aa).

A helical transmembrane segment spans residues 76–96 (FIMSSGCFLIASLSCVGLTVF).

Its subcellular location is the membrane. This is an uncharacterized protein from Saccharomyces cerevisiae (strain ATCC 204508 / S288c) (Baker's yeast).